A 223-amino-acid chain; its full sequence is Ribose-5-phosphate isomerase A (223 aa).

Substrate contacts are provided by residues 32-35, 85-88, and 98-101; these read TGST, DGAD, and KGGG. The active-site Proton acceptor is E107. K125 contributes to the substrate binding site.

Belongs to the ribose 5-phosphate isomerase family. Homodimer.

It catalyses the reaction aldehydo-D-ribose 5-phosphate = D-ribulose 5-phosphate. It participates in carbohydrate degradation; pentose phosphate pathway; D-ribose 5-phosphate from D-ribulose 5-phosphate (non-oxidative stage): step 1/1. In terms of biological role, catalyzes the reversible conversion of ribose-5-phosphate to ribulose 5-phosphate. This chain is Ribose-5-phosphate isomerase A, found in Marinomonas sp. (strain MWYL1).